The following is a 299-amino-acid chain: Diaminopimelate epimerase (299 aa).

Substrate-binding residues include Asn-11 and Asn-63. Residue Cys-72 is the Proton donor of the active site. Substrate contacts are provided by residues 73–74 (GN), Asn-211, and 229–230 (ER). Residue Cys-238 is the Proton acceptor of the active site. 239–240 (GT) contributes to the substrate binding site.

Belongs to the diaminopimelate epimerase family. In terms of assembly, homodimer.

It localises to the cytoplasm. It carries out the reaction (2S,6S)-2,6-diaminopimelate = meso-2,6-diaminopimelate. The protein operates within amino-acid biosynthesis; L-lysine biosynthesis via DAP pathway; DL-2,6-diaminopimelate from LL-2,6-diaminopimelate: step 1/1. In terms of biological role, catalyzes the stereoinversion of LL-2,6-diaminopimelate (L,L-DAP) to meso-diaminopimelate (meso-DAP), a precursor of L-lysine and an essential component of the bacterial peptidoglycan. The polypeptide is Diaminopimelate epimerase (Natranaerobius thermophilus (strain ATCC BAA-1301 / DSM 18059 / JW/NM-WN-LF)).